The chain runs to 185 residues: Ribosome-recycling factor (185 aa).

It belongs to the RRF family.

It is found in the cytoplasm. Functionally, responsible for the release of ribosomes from messenger RNA at the termination of protein biosynthesis. May increase the efficiency of translation by recycling ribosomes from one round of translation to another. The polypeptide is Ribosome-recycling factor (Rhodococcus erythropolis (strain PR4 / NBRC 100887)).